The chain runs to 432 residues: Adenylosuccinate synthetase (432 aa).

GTP is bound by residues 13–19 (GDEGKGK) and 41–43 (GHT). Asp14 serves as the catalytic Proton acceptor. Mg(2+) contacts are provided by Asp14 and Gly41. IMP contacts are provided by residues 14–17 (DEGK), 39–42 (NAGH), Thr130, Arg144, Gln225, Thr240, and Arg304. The Proton donor role is filled by His42. Residue 300 to 306 (ATTGRKR) participates in substrate binding. GTP-binding positions include Arg306, 332 to 334 (KLD), and 415 to 417 (STG).

It belongs to the adenylosuccinate synthetase family. As to quaternary structure, homodimer. Mg(2+) is required as a cofactor.

The protein localises to the cytoplasm. The enzyme catalyses IMP + L-aspartate + GTP = N(6)-(1,2-dicarboxyethyl)-AMP + GDP + phosphate + 2 H(+). It functions in the pathway purine metabolism; AMP biosynthesis via de novo pathway; AMP from IMP: step 1/2. Plays an important role in the de novo pathway of purine nucleotide biosynthesis. Catalyzes the first committed step in the biosynthesis of AMP from IMP. The polypeptide is Adenylosuccinate synthetase (Vibrio cholerae serotype O1 (strain M66-2)).